Consider the following 394-residue polypeptide: Phosphoglycerate kinase (394 aa).

Substrate is bound by residues 21–23 (DFN), Arg36, 59–62 (HLGR), Arg118, and Arg151. The residue at position 183 (Ser183) is a Phosphoserine. ATP-binding residues include Lys201 and Gly292. A Phosphothreonine modification is found at Thr299. ATP-binding positions include Glu323 and 350–353 (GGDS).

Belongs to the phosphoglycerate kinase family. In terms of assembly, monomer.

It is found in the cytoplasm. It catalyses the reaction (2R)-3-phosphoglycerate + ATP = (2R)-3-phospho-glyceroyl phosphate + ADP. It participates in carbohydrate degradation; glycolysis; pyruvate from D-glyceraldehyde 3-phosphate: step 2/5. This Bacillus mycoides (strain KBAB4) (Bacillus weihenstephanensis) protein is Phosphoglycerate kinase.